The following is a 578-amino-acid chain: Probable methylcrotonoyl-CoA carboxylase beta chain, mitochondrial (578 aa).

The transit peptide at 1 to 29 directs the protein to the mitochondrion; it reads MIRLNWLFRSSSVLLRSQVRLLHVGDANV. The region spanning 48–305 is the CoA carboxyltransferase N-terminal domain; it reads MASLVGDLRN…SATNSYNDQL (258 aa). A carboxyltransferase region spans residues 48–570; sequence MASLVGDLRN…KAALNNAGQE (523 aa). Residues 321–570 enclose the CoA carboxyltransferase C-terminal domain; sequence AVEEPRYDAE…KAALNNAGQE (250 aa). Residues 355 to 388 are acyl-CoA binding; sequence DGSRFTEFKKLYGETLVCGFAKLYGHTVGIVGNN.

The protein belongs to the AccD/PCCB family. Expressed in third instar larval ring gland (lateral and medial secretory cells and corpus cardiacum cells) and CNS.

Its subcellular location is the mitochondrion matrix. It catalyses the reaction 3-methylbut-2-enoyl-CoA + hydrogencarbonate + ATP = 3-methyl-(2E)-glutaconyl-CoA + ADP + phosphate + H(+). It functions in the pathway amino-acid degradation; L-leucine degradation; (S)-3-hydroxy-3-methylglutaryl-CoA from 3-isovaleryl-CoA: step 2/3. Functionally, carboxyltransferase subunit of the 3-methylcrotonyl-CoA carboxylase, an enzyme that catalyzes the conversion of 3-methylcrotonyl-CoA to 3-methylglutaconyl-CoA, a critical step for leucine and isovaleric acid catabolism. Vital for adult survival. The sequence is that of Probable methylcrotonoyl-CoA carboxylase beta chain, mitochondrial from Drosophila melanogaster (Fruit fly).